The sequence spans 1587 residues: Mediator of RNA polymerase II transcription subunit 23 (1587 aa).

Disordered stretches follow at residues Ser1374–His1484 and Gln1567–His1587. Basic and acidic residues predominate over residues Pro1385–Val1404. The tract at residues Glu1387–Val1404 is acidic. The span at Leu1410–Leu1426 shows a compositional bias: polar residues. A compositionally biased stretch (low complexity) spans Pro1430–His1450. The segment covering Asp1463–His1484 has biased composition (polar residues). Residues Gln1567–Gln1576 show a composition bias toward low complexity. A compositionally biased stretch (basic residues) spans Gln1577–His1587.

This sequence belongs to the Mediator complex subunit 23 family. In terms of assembly, component of the Mediator complex. Interacts with let-19/mdt-13.

Its subcellular location is the nucleus. In terms of biological role, component of the Mediator complex, a coactivator involved in regulated gene transcription of nearly all RNA polymerase II-dependent genes. Mediator functions as a bridge to convey information from gene-specific regulatory proteins to the basal RNA polymerase II transcription machinery. Mediator is recruited to promoters by direct interactions with regulatory proteins and serves as a scaffold for the assembly of a functional pre-initiation complex with RNA polymerase II and the general transcription factors. Functions downstream of receptor let-23 and let-60/Ras during vulval induction likely by down-regulating the expression of phosphatase dep-1 and lin-12/Notch in vulva precursor cell descendants with a primary cell fate. Acts to repress beta-catenin target genes. Required for asymmetric division of T-cells. Plays a role in responses to M.nematophilum-mediated bacterial infection by promoting tail swelling and preventing constipation. This chain is Mediator of RNA polymerase II transcription subunit 23 (sur-2), found in Caenorhabditis elegans.